Reading from the N-terminus, the 1287-residue chain is DENN domain-containing protein 5A (1287 aa).

One can recognise a uDENN domain in the interval 57-259; it reads STTEGENFEQ…EVPLPPPGRS (203 aa). The residue at position 193 (serine 193) is a Phosphoserine. The 137-residue stretch at 278–414 folds into the cDENN domain; it reads ELPLFDFPVK…LEFVQEVSEI (137 aa). The 183-residue stretch at 416-598 folds into the dDENN domain; it reads MAFGVPPEGN…IMCHDDDDKD (183 aa). An RUN 1 domain is found at 787–950; that stretch reads VEENTLIASL…DYFCFTNVFT (164 aa). A PLAT domain is found at 954–1062; sequence IPYHILIVPS…DDGSLERVLV (109 aa). A Phosphothreonine modification is found at threonine 1079. Phosphoserine is present on residues serine 1085, serine 1087, and serine 1096. Residues 1134–1280 form the RUN 2 domain; it reads TLLLCGECGL…QEFNITLDTS (147 aa).

The protein belongs to the RAB6IP1 family. Interacts with RAB6A bound to GTP.

The protein localises to the golgi apparatus membrane. Functionally, guanine nucleotide exchange factor (GEF) which may activate RAB6A and RAB39A and/or RAB39B. Promotes the exchange of GDP to GTP, converting inactive GDP-bound Rab proteins into their active GTP-bound form. Involved in the negative regulation of neurite outgrowth. In Mus musculus (Mouse), this protein is DENN domain-containing protein 5A (Dennd5a).